We begin with the raw amino-acid sequence, 89 residues long: Small ribosomal subunit protein uS15 (89 aa).

It belongs to the universal ribosomal protein uS15 family. In terms of assembly, part of the 30S ribosomal subunit. Forms a bridge to the 50S subunit in the 70S ribosome, contacting the 23S rRNA.

Its function is as follows. One of the primary rRNA binding proteins, it binds directly to 16S rRNA where it helps nucleate assembly of the platform of the 30S subunit by binding and bridging several RNA helices of the 16S rRNA. Functionally, forms an intersubunit bridge (bridge B4) with the 23S rRNA of the 50S subunit in the ribosome. This is Small ribosomal subunit protein uS15 from Chloroflexus aurantiacus (strain ATCC 29366 / DSM 635 / J-10-fl).